Consider the following 219-residue polypeptide: MLRAGAPTAGSFRTEEVHTGTTIMAVEFDGGVVVGSDSRVSAGTAVVNRVFDKLSPLHQRIFCALSGSAADAQAIADMAAYQLELHGLELEEPPLVLAAANVVKNISYKYREDLLAHLIVAGWDQREGGQVYGTMGGMLIRQPFTISGSGSSYIYGYVDAAYKPGMTPEECRRFTTNAITLAMNRDGSSGGVIYLVTITAAGVDHRVILGDELPKFYDE.

Positions 1-20 are cleaved as a propeptide — removed in mature form; that stretch reads MLRAGAPTAGSFRTEEVHTG. The active-site Nucleophile is threonine 21. N6-acetyllysine is present on residues lysine 53 and lysine 109.

It belongs to the peptidase T1B family. The 26S proteasome consists of a 20S proteasome core and two 19S regulatory subunits. The 20S proteasome core is composed of 28 subunits that are arranged in four stacked rings, resulting in a barrel-shaped structure. The two end rings are each formed by seven alpha subunits, and the two central rings are each formed by seven beta subunits. The catalytic chamber with the active sites is on the inside of the barrel. Component of the immunoproteasome, where it displaces the equivalent housekeeping subunit PSMB6. Component of the spermatoproteasome, a form of the proteasome specifically found in testis. Post-translationally, autocleaved. The resulting N-terminal Thr residue of the mature subunit is responsible for the nucleophile proteolytic activity.

The protein localises to the cytoplasm. Its subcellular location is the nucleus. It carries out the reaction Cleavage of peptide bonds with very broad specificity.. Its function is as follows. The proteasome is a multicatalytic proteinase complex which is characterized by its ability to cleave peptides with Arg, Phe, Tyr, Leu, and Glu adjacent to the leaving group at neutral or slightly basic pH. The proteasome has an ATP-dependent proteolytic activity. This subunit is involved in antigen processing to generate class I binding peptides. The polypeptide is Proteasome subunit beta type-9 (Psmb9) (Mus musculus bactrianus (Southwestern Asian house mouse)).